The sequence spans 456 residues: Bifunctional protein GlmU (456 aa).

A pyrophosphorylase region spans residues methionine 1–arginine 228. UDP-N-acetyl-alpha-D-glucosamine-binding positions include leucine 10–glycine 13, lysine 24, glutamine 75, and glycine 80–threonine 81. Residue aspartate 105 coordinates Mg(2+). Residues glycine 142, glutamate 157, asparagine 172, and asparagine 226 each contribute to the UDP-N-acetyl-alpha-D-glucosamine site. Asparagine 226 contacts Mg(2+). Positions leucine 229 to serine 249 are linker. Residues glycine 250–glycine 456 form an N-acetyltransferase region. Residues arginine 331 and lysine 349 each coordinate UDP-N-acetyl-alpha-D-glucosamine. Histidine 361 acts as the Proton acceptor in catalysis. Tyrosine 364 and asparagine 375 together coordinate UDP-N-acetyl-alpha-D-glucosamine. Residues alanine 378, asparagine 384–tyrosine 385, alanine 421, and arginine 437 each bind acetyl-CoA.

In the N-terminal section; belongs to the N-acetylglucosamine-1-phosphate uridyltransferase family. This sequence in the C-terminal section; belongs to the transferase hexapeptide repeat family. As to quaternary structure, homotrimer. Mg(2+) serves as cofactor.

Its subcellular location is the cytoplasm. The enzyme catalyses alpha-D-glucosamine 1-phosphate + acetyl-CoA = N-acetyl-alpha-D-glucosamine 1-phosphate + CoA + H(+). It carries out the reaction N-acetyl-alpha-D-glucosamine 1-phosphate + UTP + H(+) = UDP-N-acetyl-alpha-D-glucosamine + diphosphate. It participates in nucleotide-sugar biosynthesis; UDP-N-acetyl-alpha-D-glucosamine biosynthesis; N-acetyl-alpha-D-glucosamine 1-phosphate from alpha-D-glucosamine 6-phosphate (route II): step 2/2. The protein operates within nucleotide-sugar biosynthesis; UDP-N-acetyl-alpha-D-glucosamine biosynthesis; UDP-N-acetyl-alpha-D-glucosamine from N-acetyl-alpha-D-glucosamine 1-phosphate: step 1/1. Its pathway is bacterial outer membrane biogenesis; LPS lipid A biosynthesis. Catalyzes the last two sequential reactions in the de novo biosynthetic pathway for UDP-N-acetylglucosamine (UDP-GlcNAc). The C-terminal domain catalyzes the transfer of acetyl group from acetyl coenzyme A to glucosamine-1-phosphate (GlcN-1-P) to produce N-acetylglucosamine-1-phosphate (GlcNAc-1-P), which is converted into UDP-GlcNAc by the transfer of uridine 5-monophosphate (from uridine 5-triphosphate), a reaction catalyzed by the N-terminal domain. The sequence is that of Bifunctional protein GlmU from Gloeobacter violaceus (strain ATCC 29082 / PCC 7421).